The primary structure comprises 443 residues: METFILSSDSDDDSGPPPSKRRTIEGIPRSFSGDKKIRFSFGASNMSQDTTQEIIPEDTDTVPLTIPSTPALSGKFDSKTPKSVRRRSVSMSCFTPIVETINQPPTNQACSSFLQKEYNFHDLSSDEEGGDGGAGCSKDEDKIIEDNLNLRALLSPEKKKRKEKIEEVQNEFYGVYCLISRSDRPCYKNRCYIGYTVDPNRRIMQHNGGRDKGGAKKTDSRGPWDMVCVVHGFPNHVAALHFEWAWQNPLVSKSLKEKQLRKERKETPFAFQLRIACELMNSSAFCRFALTFRWLITTEELPFPTSCVPPDHTKLRFGKVKKEMSLVPSKREDYLEMGECRICGKDIEKLWSLVRCISATCPSHFHSKCLSENGLKLKNEHVDHVYPLKANCPTCGQFYLWGDIIREQRRIIKISTKCAEEFQNMVVRKELPHREISPISSKK.

The segment at 1–27 is disordered; the sequence is METFILSSDSDDDSGPPPSKRRTIEGI. Residues 171-258 enclose the GIY-YIG domain; it reads EFYGVYCLIS…PLVSKSLKEK (88 aa). The SLX1-type zinc-finger motif lies at 340-395; sequence CRICGKDIEKLWSLVRCISATCPSHFHSKCLSENGLKLKNEHVDHVYPLKANCPTC.

Belongs to the SLX1 family. Forms a heterodimer with him-18/slx-4. It depends on a divalent metal cation as a cofactor.

It localises to the nucleus. In terms of biological role, catalytic subunit of a heterodimeric structure-specific endonuclease that resolves DNA secondary structures generated during DNA repair and recombination. Has endonuclease activity towards branched DNA substrates, introducing single-strand cuts in duplex DNA close to junctions with ss-DNA (Potential). Has a preference for replication forks over 5' flap structures or Holliday junctions and shows much lower activity toward 3' flap structures. Required for proper crossover distribution through inhibition of crossover formation at the central region of chromosomes. The polypeptide is Structure-specific endonuclease subunit SLX1 homolog (Caenorhabditis elegans).